The primary structure comprises 64 residues: Small ribosomal subunit protein bS21 (64 aa).

Residues Glu37–Ala64 form a disordered region. Over residues Arg53–Ala64 the composition is skewed to basic residues.

Belongs to the bacterial ribosomal protein bS21 family.

The sequence is that of Small ribosomal subunit protein bS21 from Syntrophotalea carbinolica (strain DSM 2380 / NBRC 103641 / GraBd1) (Pelobacter carbinolicus).